The sequence spans 1776 residues: MAFELALNALASSTHKDSSLNPVLNSAVQPLQTSLQNFPWIIGKEHLPFLLAAGIPTSGFGCNPHPHAVHKVIETFLLFNHWSFMATVQASVMFMKPSKFKKLASVNPNFSELVNYRLTAADSVRYPSTSTSLPKYEIVFMHDALMYFNPSQILDLFIQCPSLQRLHCSLVVPPESSFTDLSLHPNLYTYTISGNTLHYVPEGHHAGSYDQPLDAISWLKLNSIHSPHLNLSVSKLESWGPVHSLLITRGLPHLPSSEKQQVSFHIPNCLPLPEATFLHQPLRHRLVPTEVYDALFTYTRAVRTLRTSDPAGFVRTHSNKPQYSWVTSRAWDNLQTYALLNAPVRPVVLFDFFLSPLKKFQLFMSQHINSLVIKALPFLGLIPPLVKLTTLGFPIPSVSHFQILFFTMIGPSGQFILEAFPSMLHPAISYLESCGLVPRLPPPVAQQLQTMGILRKRSAFSLKTSLSTVKWPSWKITALISALPAALSVFLKTISPLSLQSLHDGYNAHLHPSPFNLSWSLETFHVQSPSPFLPLSLTPPSPSEEIALPPPIFRVPPPLPAQETPSPPAPALVPPTQPPQPQPWEEIISTFLSSLNASSHKPSPSSAPLESPSPIPESFEVLAEAPQHQRSINECGALNQLPLPVPSPLQNSTNPKPPFPSSDLLSDMSCTGPVVEFETIFPAEYHMSNGSFPTRLRGHPRSSAPFPQKHCLLTAVASQLSYTEHQLWEFLCDMLPDSLLTNSEVENFGLSTDHLTCLSYRLHFECIIHTSHSTIPYGIKKASTVIQISYIDGPPKHFKAFIKLAAAAPGSNPSKSNLVRAALRFKYNDAFLPFWDAHQHTISVPHAKNLISNMKNGFDGITSQLSGPSNKSPKMKLLELDATIDVSFPRKCDVIHIAGFPGCGKSHPIQKLLQTPAFRHFRLSVPTNELRSEWKRDLNLPESEVWRLCTWETALFKSSNILVVDEIYKLPRGYLDLILLADPSIQLVIMLGDPLQGEYHSSHPSSSNSRLESETTRLSKYIDCYCWWTYRCPKAVADLFGVKTFNSNEGFIRAVLSHPPNLPNLVNSIATANTMQSLGHHALTISSSQGMTYSDPVTVLLDRHSLLITPQTALVALTRSRSGIYFIGSMYTASGSAGTSYMFSCALTGLPVDMMSAFPLFHTLPLIHEPIRSRRHRLVAGHTPSLHVPPSNKWPHRLHLPPHIPTSHSKDVILAHGIVASNAPERRLTTLHLPPTRLPLHFDLESCNPSTVSTSSTSNSEVPFTHAFLGESFEELAAHFLPAHDPDLKEVTVGDQTSQQFPYLDQPYTLSCQPSSLLAASHKPASDPTLLIFSISKRLRFRASSSPYAFTPNDLILGHLLYTNWCKAFGRCPNSTIPFNPALFAECICLNEYAQLSSKTQATIVSNASRSDPDWRYTVVRIFAKSQHKVNDGSIFGSWKACQTLALMHDFVILTLGPVKKYQRIIDHYDRPNFIYTHCGKTPSELSAWSHSFLKGDAYICNDYTSFDQSQHGEAVIFESLKMHRVGIPRHLIDLHIYLKTNVSTQFGPLTCMRLTGEPGTYDDNTDYNLAVIFSQYVISDHPIMVSGDDSVICGHPPINPNWPAVEKLLHLRFKTEETSLPLFCGYYVGPTGCCRNPFALFAKLMISYDKGNLFETLPSYLYEFSIGHRLGDVVRLLFPDHLLKYYSACWDLFCRKCTASQKLILSFEPIPPSFFSKLASTSRWVSKVLFSDLPTKIRDMLISSSKLPSYHQDPRVQYLESELLTSFNHGRLSTN.

Residues 58–219 (SGFGCNPHPH…DQPLDAISWL (162 aa)) form the Alphavirus-like MT domain. Residues 546-582 (IALPPPIFRVPPPLPAQETPSPPAPALVPPTQPPQPQ) show a composition bias toward pro residues. Disordered stretches follow at residues 546–583 (IALP…QPQP) and 595–615 (LNAS…PSPI). In terms of domain architecture, Peptidase C21 spans 658 to 812 (PFPSSDLLSD…KLAAAAPGSN (155 aa)). Active-site for protease activity residues include cysteine 711 and histidine 797. The region spanning 866 to 1026 (SGPSNKSPKM…RLSKYIDCYC (161 aa)) is the (+)RNA virus helicase ATP-binding domain. 899-906 (GFPGCGKS) contributes to the ATP binding site. In terms of domain architecture, (+)RNA virus helicase C-terminal spans 1027–1159 (WWTYRCPKAV…LPVDMMSAFP (133 aa)). The RdRp catalytic domain occupies 1497–1603 (DAYICNDYTS…CGHPPINPNW (107 aa)).

It belongs to the Tymoviridae non-structural replication polyprotein family. Specific enzymatic cleavages by the host yield mature proteins.

It carries out the reaction RNA(n) + a ribonucleoside 5'-triphosphate = RNA(n+1) + diphosphate. Acts as a cysteine protease, methyltransferase and deubiquitinase. The cysteine protease activity cleaves the polyprotein giving rise to mature proteins. The methyltransferase domain is probably involved in viral RNA capping. Functionally, RNA-directed RNA polymerase is responsible for the replication and transcription of the genome. The protein is Non-structural replication polyprotein of Ononis yellow mosaic virus.